We begin with the raw amino-acid sequence, 1099 residues long: ATP-dependent helicase/deoxyribonuclease subunit B (1099 aa).

Positions 766, 1056, 1059, and 1065 each coordinate [4Fe-4S] cluster.

It belongs to the helicase family. AddB/RexB type 2 subfamily. In terms of assembly, heterodimer of AddA and RexB. Requires Mg(2+) as cofactor. [4Fe-4S] cluster serves as cofactor.

The heterodimer acts as both an ATP-dependent DNA helicase and an ATP-dependent, dual-direction single-stranded exonuclease. Recognizes the chi site generating a DNA molecule suitable for the initiation of homologous recombination. This subunit has 5' -&gt; 3' nuclease activity but not helicase activity. The polypeptide is ATP-dependent helicase/deoxyribonuclease subunit B (Lactococcus lactis subsp. lactis (strain IL1403) (Streptococcus lactis)).